The primary structure comprises 1397 residues: MAKSFTGRKRIRKSFGRIPEVTRMPNLIEVQRSSYDHFLQMDVPPEKRANVGLQEVFRSVFPIKDFSERAVLDFVRYELEQPKYDVEECQQRGMTFAAPLKVTLRLTVFDVDEDTGLRSIRDIKEQDVYMGDMPLMTANGTFIINGTERVIVSQMHRSPGVFFDHDKGKTHSSGKYLFAARVIPYRGSWLDFEFDAKDIVYVRIDRRRKLPATTLLYALDGADSAELRAERRALGKDLLPYEAQGMAKEEILGYFYETITYQRAADGWKTGFDAERMKGQKLLTDLVDARTGEVLASRDTKLTPRLIRKLQDQGLQEIKVAIEDIIGRYLAIDIIDEKTGEVIYEAGDELSATALERLEKMGVEELPVLNVDHLNIGAYIRNTMAADRNASREDALIDIYRVMRPGEPPTLESAEALFAGLFFDQERYDLSAVGRVKMNARLGFETDDQMRVLRKEDILKILKILVELKDGRGEIDDIDHLGNRRVRSVGELMENQYRVGLLRMERAIRERMSSVEIDTVMPHDLINAKPAAAAVREFFGSSQLSQFMDQTNPLSEITHKRRLSALGPGGLTRERAGFEVRDVHPTHYGRICPIETPEGPNIGLINSLATYARVNQYGFIESPYRKVIDGRVTDEVVYLSAMEEGRYTVAEANAPLDAGNRFADPLVSCRKGGEYLLVRPDMIDLIDVSPKQLVSVAAALIPFLENDDANRALMGSNMQRQAVPLIKADSPLVGTGMEATVARDSGVTIVTRRAGIVDQVDATRIVIRATEDTDPAAPGVDIYNLLKFQRSNQNTCINQKPLVKVGDRVQKGDIIADGPSTDLGELALGRNVLVAFMPWNGYNFEDSILISERIVRDDVFTSIHIEEFEVMARDTKLGQEEITRDIPNVGEEALKNLDEAGIVYIGAEVRPGDILVGKVTPKGESPMTPEEKLLRAIFGEKASDVRDTSLRLPPGVAGTVVEVRVFSRRGVDKDERALAIERAEIEKLAKDRDDEKAILERSFYTRLKELLLGQTSVSGPKGMKGGETITDETLAGLTRGQWRHISVENDQVMEIIEQTGKVFDDSVQRLQERFENKVEKLQRGDELPPGVMKMVKVFVAVKRKLQPGDKMAGRHGNKGVISRITPIEDMPYLEDGRNVDIVLNPLGVPSRMNVGQILETHLGWAAAGIGRQIGEMLDRMRAATVEAADKARTAEDLKERLRSIYGEAVYESDIAPMSEAQLMELAGNLRRGIPFATPVFDGAREDDICRMLEAAGLDRSGQSTLIDGRTGEPFDRRVTVGYIYMLKLHHLVDDKIHARSIGPYSLVTQQPLGGKAQFGGQRFGEMEVWALEAYGAAYTLQEMLTVKSDDVSGRTKVYEAIVRGDDNFEAGIPESFNVLVKELRSLGLNVELNQRTY.

This sequence belongs to the RNA polymerase beta chain family. In terms of assembly, the RNAP catalytic core consists of 2 alpha, 1 beta, 1 beta' and 1 omega subunit. When a sigma factor is associated with the core the holoenzyme is formed, which can initiate transcription.

The enzyme catalyses RNA(n) + a ribonucleoside 5'-triphosphate = RNA(n+1) + diphosphate. In terms of biological role, DNA-dependent RNA polymerase catalyzes the transcription of DNA into RNA using the four ribonucleoside triphosphates as substrates. In Rhodospirillum centenum (strain ATCC 51521 / SW), this protein is DNA-directed RNA polymerase subunit beta.